A 133-amino-acid polypeptide reads, in one-letter code: Ribosome-binding factor A (133 aa).

The protein belongs to the RbfA family. In terms of assembly, monomer. Binds 30S ribosomal subunits, but not 50S ribosomal subunits or 70S ribosomes.

It is found in the cytoplasm. Its function is as follows. One of several proteins that assist in the late maturation steps of the functional core of the 30S ribosomal subunit. Associates with free 30S ribosomal subunits (but not with 30S subunits that are part of 70S ribosomes or polysomes). Required for efficient processing of 16S rRNA. May interact with the 5'-terminal helix region of 16S rRNA. The sequence is that of Ribosome-binding factor A from Bordetella parapertussis (strain 12822 / ATCC BAA-587 / NCTC 13253).